We begin with the raw amino-acid sequence, 271 residues long: Undecaprenyl-diphosphatase (271 aa).

Transmembrane regions (helical) follow at residues 5–25 (LLIKAFIMGIVEGLTEFLPIS), 43–63 (FATMFEIVIQLGAILAVVYYF), 80–100 (GFNLWYKTFIAFLPAAIIGIL), 109–129 (LFSPFTVAIALIVGAIMMIVI), 145–165 (VSTSKAFWIGVAQVMSLFPGM), 186–206 (AEFSFFLAIPTMLAATGFELV), 215–235 (LEWEALAVGFIMSFITALIVV), and 246–266 (VLKPFAYYRLLVGVLMLFLIA).

This sequence belongs to the UppP family.

It localises to the cell membrane. It catalyses the reaction di-trans,octa-cis-undecaprenyl diphosphate + H2O = di-trans,octa-cis-undecaprenyl phosphate + phosphate + H(+). In terms of biological role, catalyzes the dephosphorylation of undecaprenyl diphosphate (UPP). Confers resistance to bacitracin. The polypeptide is Undecaprenyl-diphosphatase (Caldanaerobacter subterraneus subsp. tengcongensis (strain DSM 15242 / JCM 11007 / NBRC 100824 / MB4) (Thermoanaerobacter tengcongensis)).